We begin with the raw amino-acid sequence, 262 residues long: uncharacterized protein (262 aa).

The helical transmembrane segment at 13–35 (VVGALLTVVVIVTAAGIIYVISH) threads the bilayer.

It localises to the membrane. This is an uncharacterized protein from Archaeoglobus fulgidus (strain ATCC 49558 / DSM 4304 / JCM 9628 / NBRC 100126 / VC-16).